A 570-amino-acid polypeptide reads, in one-letter code: Sulfite reductase [NADPH] hemoprotein beta-component (570 aa).

[4Fe-4S] cluster is bound by residues Cys-434, Cys-440, Cys-479, and Cys-483. Residue Cys-483 coordinates siroheme.

This sequence belongs to the nitrite and sulfite reductase 4Fe-4S domain family. As to quaternary structure, alpha(8)-beta(8). The alpha component is a flavoprotein, the beta component is a hemoprotein. Requires siroheme as cofactor. The cofactor is [4Fe-4S] cluster.

It carries out the reaction hydrogen sulfide + 3 NADP(+) + 3 H2O = sulfite + 3 NADPH + 4 H(+). It functions in the pathway sulfur metabolism; hydrogen sulfide biosynthesis; hydrogen sulfide from sulfite (NADPH route): step 1/1. In terms of biological role, component of the sulfite reductase complex that catalyzes the 6-electron reduction of sulfite to sulfide. This is one of several activities required for the biosynthesis of L-cysteine from sulfate. In Shigella sonnei (strain Ss046), this protein is Sulfite reductase [NADPH] hemoprotein beta-component.